Here is a 507-residue protein sequence, read N- to C-terminus: Maturase K (507 aa).

It belongs to the intron maturase 2 family. MatK subfamily.

The protein resides in the plastid. It localises to the chloroplast. Its function is as follows. Usually encoded in the trnK tRNA gene intron. Probably assists in splicing its own and other chloroplast group II introns. This is Maturase K from Cryptomeria japonica (Japanese cedar).